Here is a 633-residue protein sequence, read N- to C-terminus: MA3 DOMAIN-CONTAINING TRANSLATION REGULATORY FACTOR 4 (633 aa).

4 consecutive MI domains span residues 56-177 (DYKR…RAKK), 220-341 (ETKR…ERSD), 351-472 (RFKK…EISN), and 514-633 (DAKD…STDS). The Nuclear localization signal 1 motif lies at 94–101 (VKRLVSMA). The Nuclear localization signal 2 motif lies at 389 to 396 (LKKLITLA).

Belongs to the PDCD4 family. Binds to EIF4A1. The association with ribosomes is modulated by cellular energy status and TOR activity. Mostly expressed, at low levels, in rosette leaves and flower buds, and, to a lower extent, in roots, stems, cauline leaves and flowers.

It is found in the nucleus. The protein localises to the cytoplasm. The protein resides in the cytosol. Its function is as follows. Involved in target of rapamycin (TOR)-regulated translation control, especially under energy-deficient conditions. The chain is MA3 DOMAIN-CONTAINING TRANSLATION REGULATORY FACTOR 4 from Arabidopsis thaliana (Mouse-ear cress).